A 441-amino-acid chain; its full sequence is Peroxisome proliferator-activated receptor delta (441 aa).

Positions 1-22 are enriched in acidic residues; that stretch reads MEQPQEEAPEVREEEEKEEVAE. The interval 1-54 is disordered; that stretch reads MEQPQEEAPEVREEEEKEEVAEAEGAPELNGGPQHALPSSSYTDLSRSSSPPSL. Over residues 37–54 the composition is skewed to low complexity; that stretch reads LPSSSYTDLSRSSSPPSL. Positions 71 to 145 form a DNA-binding region, nuclear receptor; the sequence is NMECRVCGDK…LGMSHNAIRF (75 aa). 2 NR C4-type zinc fingers span residues 74-94 and 111-133; these read CRVC…CEGC and CERS…FQKC. Residues 211–439 enclose the NR LBD domain; the sequence is FVIHDIETLW…HPLLQEIYKD (229 aa).

This sequence belongs to the nuclear hormone receptor family. NR1 subfamily. In terms of assembly, heterodimer with the retinoid X receptor. Interacts (via domain NR LBD) with CRY1 and CRY2 in a ligand-dependent manner. 'Lys-48'-linked polyubiquitinated; leading to proteasomal degradation. Deubiquitinated and stabilized by OTUD3. Ubiquitous with maximal levels in placenta and skeletal muscle.

It is found in the nucleus. Functionally, ligand-activated transcription factor key mediator of energy metabolism in adipose tissues. Receptor that binds peroxisome proliferators such as hypolipidemic drugs and fatty acids. Has a preference for poly-unsaturated fatty acids, such as gamma-linoleic acid and eicosapentanoic acid. Once activated by a ligand, the receptor binds to promoter elements of target genes. Regulates the peroxisomal beta-oxidation pathway of fatty acids. Functions as transcription activator for the acyl-CoA oxidase gene. Decreases expression of NPC1L1 once activated by a ligand. The chain is Peroxisome proliferator-activated receptor delta from Homo sapiens (Human).